We begin with the raw amino-acid sequence, 91 residues long: Large ribosomal subunit protein bL27 (91 aa).

Positions 1-26 (MAHKKGVGSSRNGRDSNPKMRGVKRF) are disordered.

This sequence belongs to the bacterial ribosomal protein bL27 family.

The sequence is that of Large ribosomal subunit protein bL27 from Chloroflexus aurantiacus (strain ATCC 29366 / DSM 635 / J-10-fl).